A 468-amino-acid polypeptide reads, in one-letter code: MVERRCYDKVNDKVLLISGMQWGDEGKGKLVTHLSKDFDLVARYNGGHNSGHEMYLDGVKYKLHSLPCGVLVPNTLNVLGNGVVVHLESLLSEIDGLLKLGIDLTNRLFISERAHLVLDLHIAIDSQLESEQGEYSTTIGTTKRGIGPTNSTKCKRTGIQLGELLNWDNFEKLLTKLTYKLNHENKVFSNSDLADLLNKELEIYKTNFSKIAHCVCDTSYMIQKYIKEGKKVFFEGANGALLDLALGTYPYVTSSNTTTSGVYNGLGISPSVKILKVGVLKAYQTRIGQGPFPTELFDDNYVKLQKHGSEVGVTTGRTRRCGWLDLVSAKYVQGFSGFDVINLTKLDVLSQFDEVKLCTNYKHKVTGTTLKNLLPPFRYLHNTIYREFLEEGRYPNCCYQFDEYEPVYKTMPGWKTDISDFKTFEQLPQNAQNYVLFIEEYLGVFIHWVCLFINNITFRWELAKMLIK.

GTP is bound by residues 23–29 (GDEGKGK) and 51–53 (GHE). The Proton acceptor role is filled by D24. D24 and G51 together coordinate Mg(2+). IMP contacts are provided by residues 24–27 (DEGK), 49–52 (NSGH), T142, R156, N238, T253, and R317. Residue H52 is the Proton donor of the active site. 313-319 (VTTGRTR) is a binding site for substrate. GTP-binding positions include R319 and 345–347 (KLD).

The protein belongs to the adenylosuccinate synthetase family. Homodimer. The cofactor is Mg(2+).

The protein localises to the cytoplasm. It carries out the reaction IMP + L-aspartate + GTP = N(6)-(1,2-dicarboxyethyl)-AMP + GDP + phosphate + 2 H(+). Its pathway is purine metabolism; AMP biosynthesis via de novo pathway; AMP from IMP: step 1/2. Functionally, plays an important role in the salvage pathway for purine nucleotide biosynthesis. Catalyzes the first committed step in the biosynthesis of AMP from IMP. The sequence is that of Adenylosuccinate synthetase from Theileria annulata.